Here is an 877-residue protein sequence, read N- to C-terminus: G-protein coupled receptor family C group 6 member A (877 aa).

The first 24 residues, 1–24 (MAGLDLSLVLMLSVLAGVREVSLT), serve as a signal peptide directing secretion. At 25 to 567 (QVNQQGVIAP…EYFEWNSGFA (543 aa)) the chain is on the extracellular side. N-linked (GlcNAc...) asparagine glycosylation is found at Asn-53, Asn-99, Asn-135, Asn-263, Asn-310, Asn-322, Asn-338, and Asn-358. Asp-388 contacts L-lysine. 5 N-linked (GlcNAc...) asparagine glycosylation sites follow: Asn-430, Asn-475, Asn-484, Asn-528, and Asn-548. A helical transmembrane segment spans residues 568–588 (IALLTLAALGILLLISMSALF). Over 589–603 (FWQRNSLVVKAAGGP) the chain is Cytoplasmic. The helical transmembrane segment at 604–624 (LCHLILFSLLGSFISVIFFVG) threads the bilayer. The Extracellular portion of the chain corresponds to 625 to 635 (EPSNESCRVRQ). N-linked (GlcNAc...) asparagine glycosylation is present at Asn-628. The chain crosses the membrane as a helical span at residues 636 to 656 (VIFGLSFTLCVSCILVKSLKI). The Cytoplasmic portion of the chain corresponds to 657–676 (LLAFQMNLELKELLRKLYKP). Residues 677–697 (YVIVCMCMGLQVTICTLWLTL) traverse the membrane as a helical segment. The Extracellular segment spans residues 698–720 (HRPFIEKVVQPKSILLECNEGSD). A helical transmembrane segment spans residues 721–741 (LMFGLMLGYIVLLALICFTFA). Residues 742 to 755 (YKGRKLPQKYNEAK) are Cytoplasmic-facing. The chain crosses the membrane as a helical span at residues 756–776 (FITFGMLIYLMAWVIFIPVHV). Residues 777 to 782 (TTSGKY) are Extracellular-facing. The chain crosses the membrane as a helical span at residues 783–803 (VPAVEVVVILISNYGILSCHF). The Cytoplasmic segment spans residues 804–877 (LPKCYIIIFK…VSVPEIDNVL (74 aa)).

It belongs to the G-protein coupled receptor 3 family. In terms of assembly, homodimer; disulfide-linked. Expressed in olfactory epithelium. Also expressed in gills, tongue, lips and palatal organ. Not expressed in brain, kidney, liver, muscle, intestine, ovary and skin. In olfactory epithelium, it is widely expressed over the apical and medial portions of the olfactory sensory neurons, regions that contain olfactory neurons. Expressed in external epithelia, which contains taste buds and solitary chemosensory cells. On gill rakers, it is widely expressed in the surface epithelium, but excluded from taste buds.

Its subcellular location is the cell membrane. Functionally, olfactory receptor that is activated by amino acids that act as potent odorants in fish. Most highly activated by basic amino acids such as L-lysine and L-arginine. In Carassius auratus (Goldfish), this protein is G-protein coupled receptor family C group 6 member A (gprc6a).